The following is a 39-amino-acid chain: Photosystem II reaction center protein J (39 aa).

The chain crosses the membrane as a helical span at residues I7 to F27.

This sequence belongs to the PsbJ family. As to quaternary structure, PSII is composed of 1 copy each of membrane proteins PsbA, PsbB, PsbC, PsbD, PsbE, PsbF, PsbH, PsbI, PsbJ, PsbK, PsbL, PsbM, PsbT, PsbX, PsbY, PsbZ, Psb30/Ycf12, peripheral proteins PsbO, CyanoQ (PsbQ), PsbU, PsbV and a large number of cofactors. It forms dimeric complexes.

Its subcellular location is the cellular thylakoid membrane. In terms of biological role, this protein is a component of the reaction center of photosystem II. One of the components of the core complex of photosystem II (PSII). PSII is a light-driven water:plastoquinone oxidoreductase that uses light energy to abstract electrons from H(2)O, generating O(2) and a proton gradient subsequently used for ATP formation. It consists of a core antenna complex that captures photons, and an electron transfer chain that converts photonic excitation into a charge separation. The protein is Photosystem II reaction center protein J of Picosynechococcus sp. (strain ATCC 27264 / PCC 7002 / PR-6) (Agmenellum quadruplicatum).